The sequence spans 326 residues: Porphobilinogen deaminase (326 aa).

The residue at position 251 (C251) is an S-(dipyrrolylmethanemethyl)cysteine.

Belongs to the HMBS family. The cofactor is dipyrromethane.

It carries out the reaction 4 porphobilinogen + H2O = hydroxymethylbilane + 4 NH4(+). Its pathway is porphyrin-containing compound metabolism; protoporphyrin-IX biosynthesis; coproporphyrinogen-III from 5-aminolevulinate: step 2/4. In terms of biological role, tetrapolymerization of the monopyrrole PBG into the hydroxymethylbilane pre-uroporphyrinogen in several discrete steps. This is Porphobilinogen deaminase (HEM3) from Eremothecium gossypii (strain ATCC 10895 / CBS 109.51 / FGSC 9923 / NRRL Y-1056) (Yeast).